The chain runs to 348 residues: Holliday junction branch migration complex subunit RuvB (348 aa).

The segment at 4–186 (TDRIISANTV…FGIIQRLEFY (183 aa)) is large ATPase domain (RuvB-L). Residues isoleucine 25, arginine 26, glycine 67, lysine 70, threonine 71, threonine 72, 133 to 135 (EDY), arginine 176, tyrosine 186, and arginine 223 contribute to the ATP site. Residue threonine 71 participates in Mg(2+) binding. Positions 187–257 (SVDDLAKIVY…IADKALTMLK (71 aa)) are small ATPAse domain (RuvB-S). The tract at residues 260–348 (PVGFDHMDHK…SSDQQQNLSL (89 aa)) is head domain (RuvB-H). The DNA site is built by arginine 315 and arginine 320.

The protein belongs to the RuvB family. In terms of assembly, homohexamer. Forms an RuvA(8)-RuvB(12)-Holliday junction (HJ) complex. HJ DNA is sandwiched between 2 RuvA tetramers; dsDNA enters through RuvA and exits via RuvB. An RuvB hexamer assembles on each DNA strand where it exits the tetramer. Each RuvB hexamer is contacted by two RuvA subunits (via domain III) on 2 adjacent RuvB subunits; this complex drives branch migration. In the full resolvosome a probable DNA-RuvA(4)-RuvB(12)-RuvC(2) complex forms which resolves the HJ.

It localises to the cytoplasm. It catalyses the reaction ATP + H2O = ADP + phosphate + H(+). Functionally, the RuvA-RuvB-RuvC complex processes Holliday junction (HJ) DNA during genetic recombination and DNA repair, while the RuvA-RuvB complex plays an important role in the rescue of blocked DNA replication forks via replication fork reversal (RFR). RuvA specifically binds to HJ cruciform DNA, conferring on it an open structure. The RuvB hexamer acts as an ATP-dependent pump, pulling dsDNA into and through the RuvAB complex. RuvB forms 2 homohexamers on either side of HJ DNA bound by 1 or 2 RuvA tetramers; 4 subunits per hexamer contact DNA at a time. Coordinated motions by a converter formed by DNA-disengaged RuvB subunits stimulates ATP hydrolysis and nucleotide exchange. Immobilization of the converter enables RuvB to convert the ATP-contained energy into a lever motion, pulling 2 nucleotides of DNA out of the RuvA tetramer per ATP hydrolyzed, thus driving DNA branch migration. The RuvB motors rotate together with the DNA substrate, which together with the progressing nucleotide cycle form the mechanistic basis for DNA recombination by continuous HJ branch migration. Branch migration allows RuvC to scan DNA until it finds its consensus sequence, where it cleaves and resolves cruciform DNA. In Francisella philomiragia subsp. philomiragia (strain ATCC 25017 / CCUG 19701 / FSC 153 / O#319-036), this protein is Holliday junction branch migration complex subunit RuvB.